Reading from the N-terminus, the 175-residue chain is Large ribosomal subunit protein uL18 (175 aa).

It belongs to the universal ribosomal protein uL18 family. As to quaternary structure, part of the 50S ribosomal subunit. Contacts the 5S and 23S rRNAs.

Functionally, this is one of the proteins that bind and probably mediate the attachment of the 5S RNA into the large ribosomal subunit, where it forms part of the central protuberance. In Methanospirillum hungatei JF-1 (strain ATCC 27890 / DSM 864 / NBRC 100397 / JF-1), this protein is Large ribosomal subunit protein uL18.